The sequence spans 479 residues: Outer membrane protein OprJ (479 aa).

The first 19 residues, 1-19 (MRKPAFGVSALLIALTLGA), serve as a signal peptide directing secretion. The N-palmitoyl cysteine moiety is linked to residue cysteine 20. Residue cysteine 20 is the site of S-diacylglycerol cysteine attachment. Residues 102–121 (LNAAATGNRQRQPADLSAGN) form a disordered region.

The protein belongs to the outer membrane factor (OMF) (TC 1.B.17) family.

The protein localises to the cell outer membrane. Functionally, channel-forming component of a multidrug resistance efflux pump. The chain is Outer membrane protein OprJ (oprJ) from Pseudomonas aeruginosa (strain ATCC 15692 / DSM 22644 / CIP 104116 / JCM 14847 / LMG 12228 / 1C / PRS 101 / PAO1).